The primary structure comprises 390 residues: L-seryl-tRNA(Sec) selenium transferase (390 aa).

Lys-225 carries the N6-(pyridoxal phosphate)lysine modification.

This sequence belongs to the SelA family. Pyridoxal 5'-phosphate serves as cofactor.

The protein localises to the cytoplasm. It carries out the reaction L-seryl-tRNA(Sec) + selenophosphate + H(+) = L-selenocysteinyl-tRNA(Sec) + phosphate. Its pathway is aminoacyl-tRNA biosynthesis; selenocysteinyl-tRNA(Sec) biosynthesis; selenocysteinyl-tRNA(Sec) from L-seryl-tRNA(Sec) (bacterial route): step 1/1. Converts seryl-tRNA(Sec) to selenocysteinyl-tRNA(Sec) required for selenoprotein biosynthesis. In Helicobacter pylori (strain J99 / ATCC 700824) (Campylobacter pylori J99), this protein is L-seryl-tRNA(Sec) selenium transferase.